A 37-amino-acid chain; its full sequence is Large ribosomal subunit protein bL36c (37 aa).

This sequence belongs to the bacterial ribosomal protein bL36 family.

It is found in the plastid. The protein localises to the chloroplast. The chain is Large ribosomal subunit protein bL36c from Physcomitrium patens (Spreading-leaved earth moss).